The chain runs to 207 residues: Large ribosomal subunit protein uL4 (207 aa).

It belongs to the universal ribosomal protein uL4 family. Part of the 50S ribosomal subunit.

In terms of biological role, one of the primary rRNA binding proteins, this protein initially binds near the 5'-end of the 23S rRNA. It is important during the early stages of 50S assembly. It makes multiple contacts with different domains of the 23S rRNA in the assembled 50S subunit and ribosome. Forms part of the polypeptide exit tunnel. This is Large ribosomal subunit protein uL4 from Geobacter sulfurreducens (strain ATCC 51573 / DSM 12127 / PCA).